The sequence spans 106 residues: UPF0213 protein VPA1222 (106 aa).

The GIY-YIG domain occupies 7 to 82 (QHWSVYLIRN…KQLTKSKKEQ (76 aa)).

Belongs to the UPF0213 family.

The sequence is that of UPF0213 protein VPA1222 from Vibrio parahaemolyticus serotype O3:K6 (strain RIMD 2210633).